The primary structure comprises 243 residues: Peptidyl-tRNA hydrolase (243 aa).

Tyr14 is a tRNA binding site. His19 functions as the Proton acceptor in the catalytic mechanism. The tRNA site is built by Phe64, Asn66, and Asn112. Positions 184–225 (AAQTRPAEKAKPLATAKPKEGEARTSGGSVAEVGAPPPSPTG) are disordered. Basic and acidic residues predominate over residues 189 to 206 (PAEKAKPLATAKPKEGEA).

This sequence belongs to the PTH family. As to quaternary structure, monomer.

Its subcellular location is the cytoplasm. The catalysed reaction is an N-acyl-L-alpha-aminoacyl-tRNA + H2O = an N-acyl-L-amino acid + a tRNA + H(+). Hydrolyzes ribosome-free peptidyl-tRNAs (with 1 or more amino acids incorporated), which drop off the ribosome during protein synthesis, or as a result of ribosome stalling. In terms of biological role, catalyzes the release of premature peptidyl moieties from peptidyl-tRNA molecules trapped in stalled 50S ribosomal subunits, and thus maintains levels of free tRNAs and 50S ribosomes. The sequence is that of Peptidyl-tRNA hydrolase from Rhodospirillum rubrum (strain ATCC 11170 / ATH 1.1.1 / DSM 467 / LMG 4362 / NCIMB 8255 / S1).